The chain runs to 111 residues: Kalata-B7 (111 aa).

The N-terminal stretch at 1 to 28 (MAKFTNCLALCLLLAAVVGAFGVELSEA) is a signal peptide. Residues 29-75 (DKSAVVNEIAEKMALQEMLDGVDKLFLRKMKSSETTLTMFLKEMQLK) constitute a propeptide that is removed on maturation. Residues 76–104 (GLPVCGETCTLGTCYTQGCTCSWPICKRN) constitute a cross-link (cyclopeptide (Gly-Asn)). Cystine bridges form between C80/C94, C84/C96, and C89/C101. Positions 105 to 111 (GLPDVAA) are excised as a propeptide.

Post-translationally, kalata-B7 is a cyclic peptide.

Probably participates in a plant defense mechanism. Has hemolytic activity. This is Kalata-B7 (OAK3) from Oldenlandia affinis.